The chain runs to 84 residues: Putative defensin-like protein 165 (84 aa).

A signal peptide spans 1 to 27 (MSTKLFSYFMLLVVLFSVLTIIPKTEA). 4 disulfide bridges follow: cysteine 31–cysteine 78, cysteine 41–cysteine 60, cysteine 46–cysteine 72, and cysteine 50–cysteine 74.

The protein belongs to the DEFL family.

The protein resides in the secreted. The sequence is that of Putative defensin-like protein 165 (LCR12) from Arabidopsis thaliana (Mouse-ear cress).